Consider the following 804-residue polypeptide: G-type lectin S-receptor-like serine/threonine-protein kinase At1g61500 (804 aa).

The N-terminal stretch at 1–24 (MMTRFACLHLFTMFLFTLLSGSSS) is a signal peptide. The Bulb-type lectin domain occupies 25–145 (AVITTESPLS…VSERALWQSF (121 aa)). Topologically, residues 25–427 (AVITTESPLS…ELDGNKRKKT (403 aa)) are extracellular. 3 N-linked (GlcNAc...) asparagine glycosylation sites follow: asparagine 54, asparagine 135, and asparagine 237. The region spanning 279–315 (PKKLCDFYGACGPFGLCVMSPSPMCKCFRGFVPKSVE) is the EGF-like; atypical domain. Disulfide bonds link cysteine 283–cysteine 295 and cysteine 289–cysteine 303. Asparagine 321, asparagine 337, and asparagine 376 each carry an N-linked (GlcNAc...) asparagine glycan. The PAN domain occupies 334–416 (CLGNSTGEDA…GELLSIRLAR (83 aa)). 2 disulfides stabilise this stretch: cysteine 369–cysteine 390 and cysteine 373–cysteine 379. A helical membrane pass occupies residues 428–448 (IVASIVSLTLFMILGFTAFGV). The Cytoplasmic segment spans residues 449–804 (WRCRVEHIAH…GMTQSVILGR (356 aa)). The Protein kinase domain occupies 491-776 (FSLSNKLGQG…DLPSPKQPTF (286 aa)). Residues 497–505 (LGQGGFGSV) and lysine 519 contribute to the ATP site. 2 positions are modified to phosphoserine: serine 525 and serine 540. Residues 580 to 597 (RKRLEIDWPKRFDIIQGI) are caM-binding. Aspartate 616 serves as the catalytic Proton acceptor. Phosphoserine occurs at positions 620 and 633. Threonine 650 is subject to Phosphothreonine. 2 positions are modified to phosphoserine: serine 693 and serine 787.

The protein belongs to the protein kinase superfamily. Ser/Thr protein kinase family.

The protein resides in the cell membrane. The catalysed reaction is L-seryl-[protein] + ATP = O-phospho-L-seryl-[protein] + ADP + H(+). It carries out the reaction L-threonyl-[protein] + ATP = O-phospho-L-threonyl-[protein] + ADP + H(+). The protein is G-type lectin S-receptor-like serine/threonine-protein kinase At1g61500 of Arabidopsis thaliana (Mouse-ear cress).